Consider the following 99-residue polypeptide: Bublin coiled-coil protein (99 aa).

Residues Leu-34–Gln-71 adopt a coiled-coil conformation. Basic and acidic residues predominate over residues Arg-66–Asp-78. The segment at Arg-66–Asp-99 is disordered.

It belongs to the UPF0184 (EST00098) family.

It is found in the cell junction. It localises to the cytoplasm. The protein resides in the cytoskeleton. Its function is as follows. Essential for intermediate filament organization in intestinal cells, interacts with intermediate filament and regulates intestinal lumen morphology. The protein is Bublin coiled-coil protein (bbln) of Danio rerio (Zebrafish).